The sequence spans 508 residues: 25-hydroxyvitamin D-1 alpha hydroxylase, mitochondrial (508 aa).

Residue Cys455 coordinates heme.

It belongs to the cytochrome P450 family. It depends on heme as a cofactor. Kidney.

The protein resides in the mitochondrion membrane. It catalyses the reaction calcidiol + 2 reduced [adrenodoxin] + O2 + 2 H(+) = calcitriol + 2 oxidized [adrenodoxin] + H2O. The enzyme catalyses secalciferol + 2 reduced [adrenodoxin] + O2 + 2 H(+) = calcitetrol + 2 oxidized [adrenodoxin] + H2O. The catalysed reaction is 25-hydroxy-24-oxocalciol + 2 reduced [adrenodoxin] + O2 + 2 H(+) = (1S)-1,25-dihydroxy-24-oxocalciol + 2 oxidized [adrenodoxin] + H2O. It carries out the reaction 25-hydroxyvitamin D2 + 2 reduced [adrenodoxin] + O2 + 2 H(+) = 1alpha,25-dihydroxyvitamin D2 + 2 oxidized [adrenodoxin] + H2O. It participates in hormone biosynthesis; vitamin D biosynthesis. Activated by cardiolipin and dioleoyl phosphatidylethanolamine (DOPE), phospholipids found in the inner mitochondrial membrane. Inhibited by high substrate concentration. A cytochrome P450 monooxygenase involved in vitamin D metabolism and in calcium and phosphorus homeostasis. Catalyzes the rate-limiting step in the activation of vitamin D in the kidney, namely the hydroxylation of 25-hydroxyvitamin D3/calcidiol at the C1alpha-position to form the hormonally active form of vitamin D3, 1alpha,25-dihydroxyvitamin D3/calcitriol that acts via the vitamin D receptor (VDR). Has 1alpha-hydroxylase activity on vitamin D intermediates of the CYP24A1-mediated inactivation pathway. Converts 24R,25-dihydroxyvitamin D3/secalciferol to 1-alpha,24,25-trihydroxyvitamin D3, an active ligand of VDR. Also active on 25-hydroxyvitamin D2. Mechanistically, uses molecular oxygen inserting one oxygen atom into a substrate, and reducing the second into a water molecule, with two electrons provided by NADPH via FDXR/adrenodoxin reductase and FDX1/adrenodoxin. This Homo sapiens (Human) protein is 25-hydroxyvitamin D-1 alpha hydroxylase, mitochondrial (CYP27B1).